We begin with the raw amino-acid sequence, 927 residues long: Heat shock protein hsp98 (927 aa).

Positions 2 to 162 constitute a Clp R domain; that stretch reads TSKMEFTDRA…TDAIQAIRGT (161 aa). Repeat regions lie at residues 7 to 87 and 99 to 162; these read FTDR…LVRL and MAPS…IRGT. The interval 179-428 is NBD1; the sequence is LAKFTIDMTA…AVRVARESQP (250 aa). Residue 224 to 231 participates in ATP binding; it reads GEPGVGKT. Residues 429–553 are a coiled coil; that stretch reads EIIDSLERKL…AALNAAAAET (125 aa). The tract at residues 454–473 is disordered; it reads EASKARLEQAKKDAENVEEE. Residues 562–752 are NBD2; sequence VGPDQINEIV…IVVMTSNLGA (191 aa). An ATP-binding site is contributed by 635-642; that stretch reads GPSGTGKT. The interval 908–927 is disordered; sequence EDAVDEVAPESEMDEDLYDD.

The protein belongs to the ClpA/ClpB family. As to quaternary structure, homohexamer, forming a ring with a central pore.

The protein localises to the cytoplasm. Its subcellular location is the nucleus. Functionally, required, in concert with Hsp40 and Hsp70 and small Hsps, for the dissociation, resolubilization and refolding of aggregates of damaged proteins after heat or other environmental stresses. Extracts proteins from aggregates by unfolding and threading them in an ATP-dependent process through the axial channel of the protein hexamer, after which they can be refolded by components of the Hsp70/Hsp40 chaperone system. This chain is Heat shock protein hsp98 (hsp98), found in Neurospora crassa (strain ATCC 24698 / 74-OR23-1A / CBS 708.71 / DSM 1257 / FGSC 987).